The chain runs to 238 residues: Photosynthetic NDH subunit of lumenal location 1, chloroplastic (238 aa).

This sequence belongs to the PsbP family. In terms of assembly, part of the chloroplast NDH complex, composed of a mixture of chloroplast and nucleus encoded subunits. Component of the NDH lumenal subcomplex, at least composed of PnsL1, PnsL2, PnsL3, PnsL4 and PnsL5.

Its subcellular location is the plastid. It localises to the chloroplast thylakoid membrane. Its function is as follows. NDH shuttles electrons from NAD(P)H:plastoquinone, via FMN and iron-sulfur (Fe-S) centers, to quinones in the photosynthetic chain and possibly in a chloroplast respiratory chain. The immediate electron acceptor for the enzyme in this species is believed to be plastoquinone. Couples the redox reaction to proton translocation, and thus conserves the redox energy in a proton gradient. Required for accumulation of the chloroplast NAD(P)H dehydrogenase (NDH) complex. This Arabidopsis thaliana (Mouse-ear cress) protein is Photosynthetic NDH subunit of lumenal location 1, chloroplastic.